The sequence spans 429 residues: Phosphoribosylamine--glycine ligase (429 aa).

The 208-residue stretch at 109–316 (KDFLARHQIP…LVDLCLAACD (208 aa)) folds into the ATP-grasp domain. 135 to 196 (LREKGAPIVI…EEFLDGEEAS (62 aa)) provides a ligand contact to ATP. 2 residues coordinate Mg(2+): Glu-286 and Asn-288.

It belongs to the GARS family. In terms of assembly, monomer. It depends on Mg(2+) as a cofactor. The cofactor is Mn(2+).

The catalysed reaction is 5-phospho-beta-D-ribosylamine + glycine + ATP = N(1)-(5-phospho-beta-D-ribosyl)glycinamide + ADP + phosphate + H(+). The protein operates within purine metabolism; IMP biosynthesis via de novo pathway; N(1)-(5-phospho-D-ribosyl)glycinamide from 5-phospho-alpha-D-ribose 1-diphosphate: step 2/2. This is Phosphoribosylamine--glycine ligase from Salmonella typhi.